A 619-amino-acid polypeptide reads, in one-letter code: DNA polymerase II small subunit (619 aa).

Residues 78–122 (EEAEKTVESQETRASELEEGGVSQVSSGELQELKEESPEISTTEE) form a disordered region. Residues 79–93 (EAEKTVESQETRASE) show a composition bias toward basic and acidic residues.

This sequence belongs to the DNA polymerase delta/II small subunit family. As to quaternary structure, heterodimer of a large subunit and a small subunit.

The catalysed reaction is DNA(n) + a 2'-deoxyribonucleoside 5'-triphosphate = DNA(n+1) + diphosphate. The enzyme catalyses Exonucleolytic cleavage in the 3'- to 5'-direction to yield nucleoside 5'-phosphates.. Possesses two activities: a DNA synthesis (polymerase) and an exonucleolytic activity that degrades single-stranded DNA in the 3' to 5' direction. Has a template-primer preference which is characteristic of a replicative DNA polymerase. In Pyrococcus abyssi (strain GE5 / Orsay), this protein is DNA polymerase II small subunit (polB).